The sequence spans 507 residues: Cytochrome P450 7B1 (507 aa).

Transmembrane regions (helical) follow at residues 14–34, 178–198, and 287–307; these read PLAL…LFLL, IFAF…YGKI, and FLWA…YYIL. Residue Cys447 coordinates heme.

The protein belongs to the cytochrome P450 family. Heme is required as a cofactor. Highly expressed in brain structures including the corpus callosum, the anterior commissure and fornix. The hippocampal expression is particularly prominent in the dentate gyrus. Expressed in liver and kidney. The hepatic expression is sexually dimorphic, predominantly detected in male liver while barely detectable in females. Expressed in lymph nodes and spleens, in both lymphoid and stromal compartments. Higher expression is detected in fibroblastic reticular cells, a type of stromal cells in the lymph nodes. Also expressed at high levels in the outer follicle and at the B cell-T cell boundary of splenic germinal centers. Expressed in dendritic cells (DCs) subpopulations being most abundant in CD8-positive DCs.

Its subcellular location is the endoplasmic reticulum membrane. It localises to the microsome membrane. The enzyme catalyses 25-hydroxycholesterol + reduced [NADPH--hemoprotein reductase] + O2 = 7alpha,25-dihydroxycholesterol + oxidized [NADPH--hemoprotein reductase] + H2O + H(+). It catalyses the reaction (25R)-cholest-5-ene-3beta,26-diol + reduced [NADPH--hemoprotein reductase] + O2 = (25R)-cholest-5-en-3beta,7alpha,26-triol + oxidized [NADPH--hemoprotein reductase] + H2O + H(+). It carries out the reaction (24S)-hydroxycholesterol + reduced [NADPH--hemoprotein reductase] + O2 = (24S)-7alpha-dihydroxycholesterol + oxidized [NADPH--hemoprotein reductase] + H2O + H(+). The catalysed reaction is (24S)-25-epoxycholesterol + reduced [NADPH--hemoprotein reductase] + O2 = (24S,25)-epoxy-7alpha-hydroxycholesterol + oxidized [NADPH--hemoprotein reductase] + H2O + H(+). The enzyme catalyses (22R)-hydroxycholesterol + reduced [NADPH--hemoprotein reductase] + O2 = (22R,7alpha)-dihydroxycholesterol + oxidized [NADPH--hemoprotein reductase] + H2O + H(+). It catalyses the reaction androst-5-en-3beta,17beta-diol + reduced [NADPH--hemoprotein reductase] + O2 = androst-5-en-3beta,7alpha,17beta-triol + oxidized [NADPH--hemoprotein reductase] + H2O + H(+). It carries out the reaction 5alpha-androstane-3beta,17beta-diol + reduced [NADPH--hemoprotein reductase] + O2 = 5alpha-androstane-3beta,6alpha,17beta-triol + oxidized [NADPH--hemoprotein reductase] + H2O + H(+). The catalysed reaction is 3beta-hydroxyandrost-5-en-17-one + reduced [NADPH--hemoprotein reductase] + O2 = 3beta,7alpha-dihydroxyandrost-5-en-17-one + oxidized [NADPH--hemoprotein reductase] + H2O + H(+). The enzyme catalyses 3beta-hydroxy-5alpha-androstan-17-one + reduced [NADPH--hemoprotein reductase] + O2 = 3beta,7alpha-dihydroxy-5alpha-androstan-17-one + oxidized [NADPH--hemoprotein reductase] + H2O + H(+). It catalyses the reaction pregnenolone + reduced [NADPH--hemoprotein reductase] + O2 = 7alpha-hydroxypregnenolone + oxidized [NADPH--hemoprotein reductase] + H2O + H(+). It participates in lipid metabolism; bile acid biosynthesis. Its pathway is steroid hormone biosynthesis. Its activity is regulated as follows. Inhibited by drugs voriconazole and metyrapone. A cytochrome P450 monooxygenase involved in the metabolism of endogenous oxysterols and steroid hormones, including neurosteroids. Mechanistically, uses molecular oxygen inserting one oxygen atom into a substrate, and reducing the second into a water molecule, with two electrons provided by NADPH via cytochrome P450 reductase (CPR; NADPH-ferrihemoprotein reductase). Catalyzes the hydroxylation of carbon hydrogen bonds of steroids with a preference for 7-alpha position. Usually metabolizes steroids carrying a hydroxy group at position 3, functioning as a 3-hydroxy steroid 7-alpha hydroxylase. Hydroxylates oxysterols, including 25-hydroxycholesterol and (25R)-cholest-5-ene-3beta,26-diol toward 7-alpha hydroxy derivatives, which may be transported to the liver and converted to bile acids. Via its product 7-alpha,25-dihydroxycholesterol, a ligand for the chemotactic G protein-coupled receptor GPR183/EBI2, regulates B cell migration in germinal centers of lymphoid organs, thus guiding efficient maturation of plasma B cells and overall antigen-specific humoral immune response. 7-alpha hydroxylates neurosteroids, including 3beta-hydroxyandrost-5-en-17-one (dehydroepiandrosterone) and pregnenolone, both involved in hippocampus-associated memory and learning. Metabolizes androstanoids toward 6- or 7-alpha hydroxy derivatives. This chain is Cytochrome P450 7B1, found in Mus musculus (Mouse).